A 463-amino-acid chain; its full sequence is MKQQAKSRKPQQPEYIFQVETLSHEGRGIAHYGSHPDHPADKHGKKVFIRYALPGETVKAQITHEAKRLEEAEMVALLAEPSANRVEAVCPHYGICGGCSMQHIHPDEQICLKQNVLQSHLQHFAGIQPEQWLEPIRSLQSDYRRRARIGVRYLPKQDRLILGFREHHSNRLTSIHTCSVLDKKLSDSLPELRNLLQSLKGKAHIGHVELAKGDYETSLLVRHIEKLNNADVNQLRQFALHKGWQLYLQPKGPESLRRIDEEQGAMRLHYALNAFDVNFAFSPLDFTQVNATVNEQMVQLACELLQLQQGERVLDLFCGLGNFSLPLARCVGAKGQVVGVEASEEMVQRATDNAKRNNLVQASFFSQDLTKDFSHHSWANQGFDALLIDPPRAGAYEIMQYVPNFGAKRIVYVSCNPATLARDAGVLVQHGYQLKKAAVMDMFTHTEHVESIALFEKIQEIND.

The TRAM domain occupies 6 to 76; it reads KSRKPQQPEY…KRLEEAEMVA (71 aa). Residues Cys-90, Cys-96, Cys-99, and Cys-178 each coordinate [4Fe-4S] cluster. 6 residues coordinate S-adenosyl-L-methionine: Gln-288, Phe-317, Asn-322, Glu-341, Asp-368, and Asp-389. Residue Cys-415 is the Nucleophile of the active site.

Belongs to the class I-like SAM-binding methyltransferase superfamily. RNA M5U methyltransferase family. RlmD subfamily.

The catalysed reaction is uridine(1939) in 23S rRNA + S-adenosyl-L-methionine = 5-methyluridine(1939) in 23S rRNA + S-adenosyl-L-homocysteine + H(+). Functionally, catalyzes the formation of 5-methyl-uridine at position 1939 (m5U1939) in 23S rRNA. The sequence is that of 23S rRNA (uracil(1939)-C(5))-methyltransferase RlmD from Acinetobacter baumannii (strain ACICU).